The chain runs to 468 residues: Tissue alpha-L-fucosidase (468 aa).

Positions 1–22 (MRSWVVGARLLLLLQLVLVLGA) are cleaved as a signal peptide. Residue Thr-173 is modified to Phosphothreonine. N-linked (GlcNAc...) asparagine glycans are attached at residues Asn-244, Asn-271, and Asn-320.

Belongs to the glycosyl hydrolase 29 family. In terms of assembly, homotetramer.

Its subcellular location is the lysosome. It catalyses the reaction an alpha-L-fucoside + H2O = L-fucose + an alcohol. The enzyme catalyses a neolactoside IV(2)-alpha-Fuc-nLc4Cer(d18:1(4E)) + H2O = a neolactoside nLc4Cer(d18:1(4E)) + L-fucose. The catalysed reaction is a neolactoside IV(2)-alpha-Fuc-nLc4Cer(d18:0) + H2O = a neolactoside nLc4Cer(d18:0) + L-fucose. Functionally, alpha-L-fucosidase is responsible for hydrolyzing the alpha-1,6-linked fucose joined to the reducing-end N-acetylglucosamine of the carbohydrate moieties of glycoproteins. The sequence is that of Tissue alpha-L-fucosidase (FUCA1) from Bos taurus (Bovine).